Here is a 336-residue protein sequence, read N- to C-terminus: HTH-type transcriptional repressor PurR (336 aa).

Positions 2 to 56 constitute an HTH lacI-type domain; sequence ATIKDVAKMAGVSTTTVSHVINKTRFVAKDTEEAVLSAIKQLNYSPSAVARSLKV. A DNA-binding region (H-T-H motif) is located at residues 4-23; the sequence is IKDVAKMAGVSTTTVSHVIN. The DNA-binding element occupies 48–56; the sequence is SAVARSLKV. Y73, K188, T190, F219, and D273 together coordinate hypoxanthine.

As to quaternary structure, homodimer.

The protein operates within purine metabolism; purine nucleotide biosynthesis [regulation]. Is the main repressor of the genes involved in the de novo synthesis of purine nucleotides, regulating purB, purC, purEK, purF, purHD, purL, purMN and guaBA expression. PurR is allosterically activated to bind its cognate DNA by binding the purine corepressors, hypoxanthine or guanine, thereby effecting transcription repression. This Haemophilus influenzae (strain ATCC 51907 / DSM 11121 / KW20 / Rd) protein is HTH-type transcriptional repressor PurR.